The primary structure comprises 97 residues: Peptide YY (97 aa).

The N-terminal stretch at 1 to 28 (MMSGRRSWPAMATVLLTLLVCLGELVDA) is a signal peptide. Serine 41 carries the phosphoserine modification. Position 64 is a phenylalanine amide (phenylalanine 64). A propeptide spanning residues 68 to 97 (DFSEALLSILLFPDREDPPVKSRPEGAYLW) is cleaved from the precursor.

This sequence belongs to the NPY family.

The protein localises to the secreted. Its function is as follows. This gut peptide inhibits exocrine pancreatic secretion, has a vasoconstrictory action and inhibitis jejunal and colonic mobility. In Bos taurus (Bovine), this protein is Peptide YY (PYY).